Here is an 837-residue protein sequence, read N- to C-terminus: Espin (837 aa).

ANK repeat units lie at residues 1-31, 35-66, 69-99, 103-132, 137-167, 171-201, 205-235, 238-267, and 270-299; these read MALEQAMQAARRGDLDVLRSLHAAGLLGPSL, LDALPVHHAARSGKLHCLRYLVEEVALPAVSR, NGATPAHDAAATGYLSCLQWLLTQGGCRVQE, SGATVLHLAARFGHPDVVNWLLYQGGANSA, TGALPIHYAAAKGDLPSMKLLVGHYPEGVNA, NGATPLYLACQEGHLEVTKYLVQECSADPHL, DGMTPLHAAAQMGHNPVLVWLVSFADVSFEQ, DGATAMHFAASRGHTKVLSWLLLHGAEISQ, and WGGTPLHDAAENGELECCQILAVNGAGLDV. A phosphoserine mark is found at S337 and S341. The segment covering 339-348 has biased composition (basic and acidic residues); that stretch reads DPSMDLEAKQ. Disordered regions lie at residues 339–459, 477–712, 745–767, and 785–816; these read DPSM…VGLH, DSLK…PATL, KLQQKMQEEEEQRRKEEEEEARL, and EREQKRKEEERQKLEEIQRAKEQSEKLRTLGY. Polar residues predominate over residues 351 to 364; that stretch reads SGMSSPNTTMSVQP. A compositionally biased stretch (low complexity) spans 376–395; that stretch reads LSNYDSCSSSHSSSKGQRST. Phosphoserine occurs at positions 400 and 401. The segment covering 423–455 has biased composition (pro residues); sequence SLPPPPPPSFPPPPPPGTQLPPPPPGYPAPNPP. Phosphoserine occurs at positions 497, 504, and 531. A compositionally biased stretch (pro residues) spans 581–604; it reads LPPPPPPPPLPEALSSPPPAPPLP. Residues 617 to 626 show a composition bias toward low complexity; that stretch reads SSSSTGSTKS. Polar residues-rich tracts occupy residues 627–636 and 651–662; these read FNMMSPTGDN and PTPQSKGLTTVF. Phosphoserine is present on S631. Residues 635–652 enclose the WH2 domain; the sequence is DNSELLAEIKAGKSLKPT. Residues 663–673 show a composition bias toward low complexity; that stretch reads SGSGQPASQPE. Residues S670, S674, and S680 each carry the phosphoserine modification. Positions 738–814 form a coiled coil; sequence KRQVMVRKLQ…KEQSEKLRTL (77 aa).

Monomer. Interacts with PFN2. Binds F-actin in a Ca(2+)-resistant fashion. Interacts (via N-terminal) with BAIAP2 (via SH3-domain). Interacts with MYO3A (via C-terminus). Interacts with MYO3B (via C-terminus). As to expression, expressed at high concentration in the microvillar parallel actin bundle (PAB) of hair cells stereocilia in the cochlea and vestibular system. Detected also at high levels of a number of other sensory cell types, including taste receptor cells, solitary chemoreceptor cells, vomeronasal sensory neurons and Merkel cells. Isoform 1 is detected in testis. Isoforms 2 is detected in small intestine and kidney (at protein level). Isoforms 3, 4, 6 and 8 are expressed in Purkinje cells dendritic spines.

The protein localises to the cytoplasm. The protein resides in the cytoskeleton. Its subcellular location is the cell projection. It localises to the stereocilium. It is found in the microvillus. The protein localises to the cell junction. The protein resides in the dendritic spine. Functionally, multifunctional actin-bundling protein. Plays a major role in regulating the organization, dimension, dynamics and signaling capacities of the actin filament-rich microvilli in the mechanosensory and chemosensory cells. Required for the assembly and stabilization of the stereociliary parallel actin bundles. Plays a crucial role in the formation and maintenance of inner ear hair cell stereocilia. Involved in the elongation of actin in stereocilia. In extrastriolar hair cells, required for targeting MYO3B to stereocilia tips, and for regulation of stereocilia diameter and staircase formation. The polypeptide is Espin (Espn) (Rattus norvegicus (Rat)).